The chain runs to 255 residues: Glutamate racemase (255 aa).

Substrate is bound by residues 7–8 and 39–40; these read DS and YG. Cysteine 70 (proton donor/acceptor) is an active-site residue. 71 to 72 is a binding site for substrate; that stretch reads NT. Cysteine 181 acts as the Proton donor/acceptor in catalysis. Residue 182-183 participates in substrate binding; it reads TH.

It belongs to the aspartate/glutamate racemases family.

It catalyses the reaction L-glutamate = D-glutamate. It participates in cell wall biogenesis; peptidoglycan biosynthesis. Functionally, provides the (R)-glutamate required for cell wall biosynthesis. In Helicobacter pylori (strain P12), this protein is Glutamate racemase.